A 546-amino-acid polypeptide reads, in one-letter code: MAKEIKFSDSARNLLFEGVRQLHDAVKVTMGPRGRNVLIQKSYGAPSITKDGVSVAKEIELSCPVANMGAQLVKEVASKTADAAGDGTTTATVLAYSIFKEGLRNITAGANPIEVKRGMDKAAEAIINELKKASKKVGGKEEITQVATISANSDHNIGKLIADAMEKVGKDGVITVEEAKGIEDELDVVEGMQFDRGYLSPYFVTNAEKMTAQLDNAYILLTDKKISSMKDILPLLEKTMKEGKPLLIIAEDIEGEALTTLVVNKLRGVLNIAAVKAPGFGDRRKEMLKDIAVLTGGQVISEELGLTLENAEVEFLGKAGRIVIDKDNTTIVDGKGHSHDVKDRVAQIKTQIASTTSDYDKEKLQERLAKLSGGVAVIKVGAASEVEMKEKKDRVDDALSATKAAVEEGIVIGGGAALIRAAQKVHLNLHDDEKVGYEIIMRAIKAPLAQIAINAGYDGGVVVNEVQKHEGHFGFNASNGKYVDMFKEGIIDPLKVERIALQNAVSVSSLLLTTEATVHEIKEEKATPAMPDMGGMGGMGGMGGMM.

ATP-binding positions include 29–32 (TMGP), Lys50, 86–90 (DGTTT), Gly414, and Asp492.

This sequence belongs to the chaperonin (HSP60) family. As to quaternary structure, forms a cylinder of 14 subunits composed of two heptameric rings stacked back-to-back. Interacts with the co-chaperonin GroES.

It is found in the cytoplasm. It catalyses the reaction ATP + H2O + a folded polypeptide = ADP + phosphate + an unfolded polypeptide.. Its function is as follows. Together with its co-chaperonin GroES, plays an essential role in assisting protein folding. The GroEL-GroES system forms a nano-cage that allows encapsulation of the non-native substrate proteins and provides a physical environment optimized to promote and accelerate protein folding. This chain is Chaperonin GroEL, found in Helicobacter pylori (strain Shi470).